The chain runs to 156 residues: Small ribosomal subunit protein uS7 (156 aa).

It belongs to the universal ribosomal protein uS7 family. As to quaternary structure, part of the 30S ribosomal subunit. Contacts proteins S9 and S11.

Functionally, one of the primary rRNA binding proteins, it binds directly to 16S rRNA where it nucleates assembly of the head domain of the 30S subunit. Is located at the subunit interface close to the decoding center, probably blocks exit of the E-site tRNA. This is Small ribosomal subunit protein uS7 from Acholeplasma laidlawii (strain PG-8A).